The sequence spans 446 residues: ATP-dependent RNA helicase SUB2 (446 aa).

Serine 2 bears the N-acetylserine mark. Phosphoserine occurs at positions 13 and 37. Residues 23–41 (ASKAAEAGETGAATSATEG) are compositionally biased toward low complexity. Residues 23–52 (ASKAAEAGETGAATSATEGDNNNNTAAGDK) are disordered. The Q motif signature appears at 62 to 90 (TGFKDFLLKPELSRAIIDCGFEHPSEVQQ). Residues 93 to 268 (IPQSIHGTDV…RRFLQNPLEI (176 aa)) enclose the Helicase ATP-binding domain. 106–113 (AKSGLGKT) contacts ATP. Residue threonine 169 is modified to Phosphothreonine. The short motif at 215-218 (DECD) is the DECD box element. The Helicase C-terminal domain maps to 280–441 (GLQQYYIKLE…EFPEEGIDPS (162 aa)).

This sequence belongs to the DEAD box helicase family. DECD subfamily. Component of the TREX complex composed of at least SUB2, TEX1, YRA1 and the four THO complex components: HPR1, MFT1, THO2 and THP1. Interacts with HPR1, YRA1, and YRA2. SUB2 may mediate the interaction between the THO complex and YRA1. Associates with growing mRNP complexes during transcription. This association requires the presence of HPR1. Also interacts with SAC3. Interacts with THO1 in the presence of RNA; this interaction facilitates RNA binding of SUB2.

The protein resides in the nucleus. The catalysed reaction is ATP + H2O = ADP + phosphate + H(+). ATP-binding RNA helicase component of the TREX complex involved in transcription elongation and required for the export of mRNA out of the nucleus. SUB2 also plays a role in pre-mRNA splicing and spliceosome assembly. May be involved in rDNA and telomeric silencing, and maintenance of genome integrity. Associates with THO1, which facilitates RNA binding of SUB2 and likely plays a role in mRNA export. This Saccharomyces cerevisiae (strain ATCC 204508 / S288c) (Baker's yeast) protein is ATP-dependent RNA helicase SUB2 (SUB2).